A 325-amino-acid polypeptide reads, in one-letter code: Foldase protein PrsA (325 aa).

Positions 1 to 20 are cleaved as a signal peptide; sequence MKLMNKIIVPVTASALLLGA. The N-palmitoyl cysteine moiety is linked to residue Cys-21. Residue Cys-21 is the site of S-diacylglycerol cysteine attachment. In terms of domain architecture, PpiC spans 139 to 245; that stretch reads ENSKKASHIL…YGYHIIKADK (107 aa). 2 disordered regions span residues 159-202 and 303-325; these read EGLS…KKDG and PDKI…NSGS.

Belongs to the PrsA family.

The protein localises to the cell membrane. It catalyses the reaction [protein]-peptidylproline (omega=180) = [protein]-peptidylproline (omega=0). Plays a major role in protein secretion by helping the post-translocational extracellular folding of several secreted proteins. This Staphylococcus epidermidis (strain ATCC 12228 / FDA PCI 1200) protein is Foldase protein PrsA.